We begin with the raw amino-acid sequence, 63 residues long: Large ribosomal subunit protein bL28 (63 aa).

This sequence belongs to the bacterial ribosomal protein bL28 family.

This Desulforudis audaxviator (strain MP104C) protein is Large ribosomal subunit protein bL28.